Here is a 348-residue protein sequence, read N- to C-terminus: UDP-glucose 4-epimerase (348 aa).

Residues 12 to 14 (GYI), 33 to 37 (DNFHN), 66 to 67 (DI), F88, and K92 each bind NAD(+). Position 132–134 (132–134 (SAT)) interacts with substrate. Y157 (proton acceptor) is an active-site residue. K161 and Y185 together coordinate NAD(+). Substrate contacts are provided by residues 185-187 (YFN), 206-208 (NNL), 224-226 (NVF), R239, and 300-303 (REGD).

It belongs to the NAD(P)-dependent epimerase/dehydratase family. Homodimer. The cofactor is NAD(+).

It catalyses the reaction UDP-alpha-D-glucose = UDP-alpha-D-galactose. The enzyme catalyses UDP-N-acetyl-alpha-D-glucosamine = UDP-N-acetyl-alpha-D-galactosamine. The protein operates within carbohydrate metabolism; galactose metabolism. In terms of biological role, catalyzes two distinct but analogous reactions: the reversible epimerization of UDP-glucose to UDP-galactose and the reversible epimerization of UDP-N-acetylglucosamine to UDP-N-acetylgalactosamine. The reaction with UDP-Gal plays a critical role in the Leloir pathway of galactose catabolism in which galactose is converted to the glycolytic intermediate glucose 6-phosphate. It contributes to the catabolism of dietary galactose and enables the endogenous biosynthesis of both UDP-Gal and UDP-GalNAc when exogenous sources are limited. Both UDP-sugar interconversions are important in the synthesis of glycoproteins and glycolipids. This is UDP-glucose 4-epimerase from Bos taurus (Bovine).